Here is a 481-residue protein sequence, read N- to C-terminus: Cys-Gly metallodipeptidase DUG1 (481 aa).

His102 provides a ligand contact to Zn(2+). Asp104 is a catalytic residue. Residue Asp137 participates in Zn(2+) binding. Catalysis depends on Glu171, which acts as the Proton acceptor. 3 residues coordinate Zn(2+): Glu172, Asp200, and His450. Ser451 carries the phosphoserine modification.

This sequence belongs to the peptidase M20A family. In terms of assembly, homodimer. Component of the GSH degradosomal complex composed of at least DUG1, DUG2 and DUG3. Zn(2+) serves as cofactor. Requires Mn(2+) as cofactor.

It localises to the cytoplasm. It is found in the mitochondrion. Catalytic component of the GSH degradosomal complex involved in the degradation of glutathione (GSH) and other peptides containing a gamma-glu-X bond. Also functions in a DUG2-DUG3-independent manner as a dipeptidase with high specificity for Cys-Gly and no activity toward tri- or tetrapeptides. In Saccharomyces cerevisiae (strain ATCC 204508 / S288c) (Baker's yeast), this protein is Cys-Gly metallodipeptidase DUG1 (DUG1).